The following is a 168-amino-acid chain: Small ribosomal subunit protein uS4 (168 aa).

An S4 RNA-binding domain is found at 103–167 (RRLQTIVYKK…SPFKKSIEEK (65 aa)).

It belongs to the universal ribosomal protein uS4 family. In terms of assembly, part of the 30S ribosomal subunit. Contacts protein S5. The interaction surface between S4 and S5 is involved in control of translational fidelity.

In terms of biological role, one of the primary rRNA binding proteins, it binds directly to 16S rRNA where it nucleates assembly of the body of the 30S subunit. With S5 and S12 plays an important role in translational accuracy. This chain is Small ribosomal subunit protein uS4, found in Staphylothermus marinus (strain ATCC 43588 / DSM 3639 / JCM 9404 / F1).